The following is a 304-amino-acid chain: Thyroxine 5-deiodinase (304 aa).

A disordered region spans residues 1–23; it reads MPRQATSRLVVGEGEGSQGASGP. Topologically, residues 1-44 are cytoplasmic; sequence MPRQATSRLVVGEGEGSQGASGPAATMLRSLLLHSLRLCAQTAS. Residues 45-67 traverse the membrane as a helical; Signal-anchor for type II membrane protein segment; sequence CLVLFPRFLGTAFMLWLLDFLCI. Topologically, residues 68–304 are extracellular; that stretch reads RKHFLGRRRR…QLHGARPRRV (237 aa). The disordered stretch occupies residues 78–99; that stretch reads GQPEPEVELNSEGEEVPPDDPP. Acidic residues predominate over residues 82–95; the sequence is PEVELNSEGEEVPP. Residue Sec170 is part of the active site. Sec170 is a non-standard amino acid (selenocysteine).

This sequence belongs to the iodothyronine deiodinase family. In terms of assembly, monomer. Homodimer. May undergo minor heretodimerization with DIO1 and DIO2. As to expression, expressed in placenta and several fetal tissues.

The protein localises to the cell membrane. Its subcellular location is the endosome membrane. The enzyme catalyses 3,3',5'-triiodo-L-thyronine + iodide + A + H(+) = L-thyroxine + AH2. The catalysed reaction is 3,3'-diiodo-L-thyronine + iodide + A + H(+) = 3,3',5-triiodo-L-thyronine + AH2. It catalyses the reaction 3-iodo-L-thyronine + iodide + A + H(+) = 3,5-diiodo-L-thyronine + AH2. It carries out the reaction L-thyronine + iodide + A + H(+) = 3-iodo-L-thyronine + AH2. The enzyme catalyses 3',5'-diiodo-L-thyronine + iodide + A + H(+) = 3,3',5'-triiodo-L-thyronine + AH2. The catalysed reaction is 3'-iodo-L-thyronine + iodide + A + H(+) = 3,3'-diiodo-L-thyronine + AH2. It catalyses the reaction 3,3',5'-triiodothyronamine + iodide + A + H(+) = 3,3',5,5'-tetraiodothyronamine + AH2. It carries out the reaction 3',5'-diiodothyronamine + iodide + A + H(+) = 3,3',5'-triiodothyronamine + AH2. The enzyme catalyses 3,3'-diiodothyronamine + iodide + A + H(+) = 3,3',5-triiodothyronamine + AH2. The catalysed reaction is 3-iodothyronamine + iodide + A + H(+) = 3,5-diiodothyronamine + AH2. It catalyses the reaction 3'-iodothyronamine + iodide + A + H(+) = 3,3'-diiodothyronamine + AH2. It carries out the reaction thyronamine + iodide + A + H(+) = 3-iodothyronamine + AH2. Functionally, plays a crucial role in the metabolism of thyroid hormones (TH) and has specific roles in TH activation and inactivation by deiodination. Catalyzes the deiodination of L-thyroxine (T4) to 3,3',5'-triiodothyronine (rT3), 3,5,3'-triiodothyronine (T3) to 3,3'-diiodothyronine (3,3'-T2), 3,5-diiodothyronine (3,5-T2) to 3-monoiodothyronine (3-T1), rT3 to 3',5'-diiodothyronine (3',5'-T2) and 3,3'-T2 to 3'-monoiodothyronine (3'-T1) via inner-ring deiodination (IRD). Catalyzes the deiodination of 3-T1 to L-thyronine (T0) via outer-ring deiodination (ORD). Catalyzes the tyrosyl ring deiodinations of 3,3',5,5'-tetraiodothyronamine, 3,3',5'-triiodothyronamine, 3,5,3'-triiodothyronamine, 3,5-diiodothyronamine, 3,3'-diiodothyronamine and 3-iodothyronamine. The protein is Thyroxine 5-deiodinase (DIO3) of Homo sapiens (Human).